We begin with the raw amino-acid sequence, 445 residues long: MKQRQFFGTDGIRGKVGAGKMTPELALKLGWAAGRVLSRAGTHKVIIGKDTRISGYLFESALEAGLSAAGLDVMLIGPMPTPAVAYLTRTFRAEAGIVISASHNPYYDNGIKFFYTDGSKLEDAVELEIEAELEKPLTCVESHLLGKVGRIDDAAGRYIEYCKSHFPAEQTLSGLKIVVDCAHGATYHIAPSVFKELGAEVIAIGDKPNGLNINDKVGATSMAKICETVLEENADLGIALDGDGDRIMMVNRHGRVIDGDEILYILACDAQKRGVLQGGVVGTLMSNLGLDLALQALDIPFVRSKVGDRYVMELLKEHDWKIGGENSGHILNLDHGTTGDGIVAGILVLAAMCRQSASLEELTAGITMLPQVLVNVRFEGADDPLSSEVVLAAKAEVEQKLGARGRVLLRKSGTEPLLRVMVEGDDRADVTQFANDIADAVRNLV.

Ser102 (phosphoserine intermediate) is an active-site residue. 4 residues coordinate Mg(2+): Ser102, Asp241, Asp243, and Asp245. Position 102 is a phosphoserine (Ser102).

It belongs to the phosphohexose mutase family. It depends on Mg(2+) as a cofactor. Activated by phosphorylation.

It catalyses the reaction alpha-D-glucosamine 1-phosphate = D-glucosamine 6-phosphate. In terms of biological role, catalyzes the conversion of glucosamine-6-phosphate to glucosamine-1-phosphate. The protein is Phosphoglucosamine mutase of Shewanella piezotolerans (strain WP3 / JCM 13877).